The primary structure comprises 212 residues: MESAATAVVPPAAAATTATATDDNLQSSDSSSPADAVNRLIHAFSQRQQHLLDKTVPHVLYRWIACLCVVLIYIVRVYFVEGFYIITYAIGIYLLNLIIAFLSPQEDPEASLTSGGSLPTRRSDEYRPFVRRLPEFKFWLSIIRAFIIGFMMTFFEVFDVPVFWPILLFYWVMLFFLTMRKQIQHMIKYRYVPFSFGKKQYGKKPAPTESSE.

N-acetylmethionine is present on methionine 1. 4 helical membrane passes run 55-75, 82-102, 135-155, and 157-177; these read TVPH…IYIV, GFYI…IAFL, EFKF…MTFF, and VFDV…LFFL.

Belongs to the RER1 family.

The protein resides in the membrane. In terms of biological role, involved in the retrieval of endoplasmic reticulum membrane proteins from the early Golgi compartment. The chain is Protein RER1C (RER1C) from Arabidopsis thaliana (Mouse-ear cress).